The sequence spans 115 residues: NADH-ubiquinone oxidoreductase chain 3 (115 aa).

A run of 3 helical transmembrane segments spans residues 3 to 23 (FALI…ITFW), 55 to 75 (FFLV…LLPL), and 84 to 104 (LPLM…SLAY).

The protein belongs to the complex I subunit 3 family. As to quaternary structure, core subunit of respiratory chain NADH dehydrogenase (Complex I) which is composed of 45 different subunits. Interacts with TMEM186. Interacts with TMEM242.

It localises to the mitochondrion inner membrane. The catalysed reaction is a ubiquinone + NADH + 5 H(+)(in) = a ubiquinol + NAD(+) + 4 H(+)(out). Functionally, core subunit of the mitochondrial membrane respiratory chain NADH dehydrogenase (Complex I) which catalyzes electron transfer from NADH through the respiratory chain, using ubiquinone as an electron acceptor. Essential for the catalytic activity of complex I. The chain is NADH-ubiquinone oxidoreductase chain 3 from Homo sapiens (Human).